Here is a 179-residue protein sequence, read N- to C-terminus: Inner membrane-spanning protein YciB (179 aa).

The next 5 membrane-spanning stretches (helical) occupy residues 22–42 (IYAATAALIVATAIVLIYSWV), 50–70 (MALITFVLVVVFGGLTLFFHN), 76–96 (WKVTVIYALFAGALLVSQWVM), 121–141 (LAWAVFFILCGLANIYIAFWL), and 149–169 (FKVFGLTALTLIFTLLSGIYI).

The protein belongs to the YciB family.

The protein localises to the cell inner membrane. Its function is as follows. Plays a role in cell envelope biogenesis, maintenance of cell envelope integrity and membrane homeostasis. The protein is Inner membrane-spanning protein YciB of Escherichia coli O127:H6 (strain E2348/69 / EPEC).